Reading from the N-terminus, the 106-residue chain is Urease subunit beta (106 aa).

The protein belongs to the urease beta subunit family. In terms of assembly, heterotrimer of UreA (gamma), UreB (beta) and UreC (alpha) subunits. Three heterotrimers associate to form the active enzyme.

It localises to the cytoplasm. It catalyses the reaction urea + 2 H2O + H(+) = hydrogencarbonate + 2 NH4(+). It functions in the pathway nitrogen metabolism; urea degradation; CO(2) and NH(3) from urea (urease route): step 1/1. The protein is Urease subunit beta of Citrobacter koseri (strain ATCC BAA-895 / CDC 4225-83 / SGSC4696).